The following is a 155-amino-acid chain: Large ribosomal subunit protein eL24 (155 aa).

Residues 97 to 129 show a composition bias toward basic and acidic residues; the sequence is KPEIRKAKRDEKAKADKEKKKADKAARKADKAK. Positions 97–155 are disordered; sequence KPEIRKAKRDEKAKADKEKKKADKAARKADKAKSAATQASKISKQQAKGAFQKVAATSR. Over residues 133 to 142 the composition is skewed to polar residues; sequence TQASKISKQQ.

This sequence belongs to the eukaryotic ribosomal protein eL24 family.

This is Large ribosomal subunit protein eL24 (RPL24) from Eremothecium gossypii (strain ATCC 10895 / CBS 109.51 / FGSC 9923 / NRRL Y-1056) (Yeast).